We begin with the raw amino-acid sequence, 434 residues long: MSVFKGEVTALPPDKSISHRAALIGALSDGTTEIVNFSGGFDNQSTLAVLQASGIALIQEECAGSYGRRIRRVVIESRGLWSFLAPQAPLMCNNSGSTMRMFAGILAAQPFESVLEGDSSLMKRPMNRVADPLRQMGAQVELSFSGTAPIRIQGTKDLHSLEYRLPVSSAQVKSLVAFAALHADGQTRIIEPIRSRDHTELMLGLETIDQPNGERVIIVPGRKRIESKPFYIPADPSAACFIVALALLAKGSDIIIRDLCLNPTRTGYLAILAGAGAGISVENSRVIGGEAIGDVLVHSEGELNSLVISDPHEVANVIDEIPMLAVLSAFSSGRFELHHAAELRTKESDRIDALVVNLERLGFQCEQYPDGFKVNGRIAMPKGVVSIESFDDHRIAMSFAIAGKATGVDLAISDIGVVGVSFPNFFEIIESLEV.

3-phosphoshikimate contacts are provided by Lys-15, Ser-16, and Arg-20. Lys-15 lines the phosphoenolpyruvate pocket. Residues Gly-96 and Arg-124 each coordinate phosphoenolpyruvate. 3-phosphoshikimate contacts are provided by Ser-169, Gln-171, Ser-195, Asp-319, and Lys-346. A phosphoenolpyruvate-binding site is contributed by Gln-171. The active-site Proton acceptor is Asp-319. Phosphoenolpyruvate contacts are provided by Arg-350 and Arg-394.

Belongs to the EPSP synthase family. In terms of assembly, monomer.

The protein localises to the cytoplasm. It catalyses the reaction 3-phosphoshikimate + phosphoenolpyruvate = 5-O-(1-carboxyvinyl)-3-phosphoshikimate + phosphate. It functions in the pathway metabolic intermediate biosynthesis; chorismate biosynthesis; chorismate from D-erythrose 4-phosphate and phosphoenolpyruvate: step 6/7. In terms of biological role, catalyzes the transfer of the enolpyruvyl moiety of phosphoenolpyruvate (PEP) to the 5-hydroxyl of shikimate-3-phosphate (S3P) to produce enolpyruvyl shikimate-3-phosphate and inorganic phosphate. This chain is 3-phosphoshikimate 1-carboxyvinyltransferase, found in Chlorobium phaeobacteroides (strain DSM 266 / SMG 266 / 2430).